Reading from the N-terminus, the 266-residue chain is 3-methyl-2-oxobutanoate hydroxymethyltransferase (266 aa).

Mg(2+) is bound by residues D45 and D84. Residues 45–46 (DS), D84, and K112 contribute to the 3-methyl-2-oxobutanoate site. E114 is a Mg(2+) binding site. E181 serves as the catalytic Proton acceptor.

It belongs to the PanB family. Homodecamer; pentamer of dimers. Mg(2+) is required as a cofactor.

The protein localises to the cytoplasm. The catalysed reaction is 3-methyl-2-oxobutanoate + (6R)-5,10-methylene-5,6,7,8-tetrahydrofolate + H2O = 2-dehydropantoate + (6S)-5,6,7,8-tetrahydrofolate. The protein operates within cofactor biosynthesis; (R)-pantothenate biosynthesis; (R)-pantoate from 3-methyl-2-oxobutanoate: step 1/2. Its function is as follows. Catalyzes the reversible reaction in which hydroxymethyl group from 5,10-methylenetetrahydrofolate is transferred onto alpha-ketoisovalerate to form ketopantoate. The protein is 3-methyl-2-oxobutanoate hydroxymethyltransferase of Pseudomonas putida (strain ATCC 700007 / DSM 6899 / JCM 31910 / BCRC 17059 / LMG 24140 / F1).